A 114-amino-acid chain; its full sequence is MASSVPSARSAYRQLLRATRIAFRDDIRVLIAARQEARRNFDSHRRQGIDTPMQINHAIEVANILRHNIVQGVRESEDEAARWELRIHDEIERGDNDSIKVGGKSVKVDKPCSA.

Residues 1–75 (MASSVPSARS…RHNIVQGVRE (75 aa)) constitute a mitochondrion transit peptide. The interval 95–114 (DNDSIKVGGKSVKVDKPCSA) is disordered.

Belongs to the complex I LYR family. MZM1 subfamily. As to quaternary structure, interacts with RIP1.

The protein localises to the mitochondrion matrix. In terms of biological role, assembly factor required for Rieske Fe-S protein RIP1 incorporation into the cytochrome b-c1 (CIII) complex. Functions as a chaperone, binding to this subunit within the mitochondrial matrix and stabilizing it prior to its translocation and insertion into the late CIII dimeric intermediate within the mitochondrial inner membrane. Modulates the mitochondrial matrix zinc pool. This Aspergillus terreus (strain NIH 2624 / FGSC A1156) protein is Mitochondrial zinc maintenance protein 1, mitochondrial (MZM1).